The following is a 206-amino-acid chain: Recombination protein RecR (206 aa).

The C4-type zinc-finger motif lies at 60-75 (CAMCNTFCEGGLCDIC). The Toprim domain maps to 83-178 (RRLMVVHMPA…KVSRLSQGIP (96 aa)).

Belongs to the RecR family.

In terms of biological role, may play a role in DNA repair. It seems to be involved in an RecBC-independent recombinational process of DNA repair. It may act with RecF and RecO. In Neisseria meningitidis serogroup B (strain ATCC BAA-335 / MC58), this protein is Recombination protein RecR.